The chain runs to 137 residues: NTF2-related export protein (137 aa).

One can recognise an NTF2 domain in the interval 19–135 (ESKKFMDVYY…YKVKSDRFRY (117 aa)).

Preferentially binds Ran-GTP.

It is found in the nucleus. Its function is as follows. Stimulator of protein export for NES-containing proteins. Also plays a role in the nuclear export of U1 snRNA, tRNA, and mRNA. The polypeptide is NTF2-related export protein (nxt-1) (Caenorhabditis elegans).